Consider the following 473-residue polypeptide: Photosystem II CP43 reaction center protein (473 aa).

The propeptide occupies M1–E14. T15 is modified (N-acetylthreonine). Position 15 is a phosphothreonine (T15). The next 5 helical transmembrane spans lie at L69 to A93, I134 to N155, K178 to T200, K255 to S275, and W291 to A312. E367 provides a ligand contact to [CaMn4O5] cluster. Residues R447–P471 form a helical membrane-spanning segment.

It belongs to the PsbB/PsbC family. PsbC subfamily. As to quaternary structure, PSII is composed of 1 copy each of membrane proteins PsbA, PsbB, PsbC, PsbD, PsbE, PsbF, PsbH, PsbI, PsbJ, PsbK, PsbL, PsbM, PsbT, PsbX, PsbY, PsbZ, Psb30/Ycf12, at least 3 peripheral proteins of the oxygen-evolving complex and a large number of cofactors. It forms dimeric complexes. It depends on Binds multiple chlorophylls and provides some of the ligands for the Ca-4Mn-5O cluster of the oxygen-evolving complex. It may also provide a ligand for a Cl- that is required for oxygen evolution. PSII binds additional chlorophylls, carotenoids and specific lipids. as a cofactor.

The protein localises to the plastid. It localises to the chloroplast thylakoid membrane. Functionally, one of the components of the core complex of photosystem II (PSII). It binds chlorophyll and helps catalyze the primary light-induced photochemical processes of PSII. PSII is a light-driven water:plastoquinone oxidoreductase, using light energy to abstract electrons from H(2)O, generating O(2) and a proton gradient subsequently used for ATP formation. This is Photosystem II CP43 reaction center protein from Chaetosphaeridium globosum (Charophycean green alga).